The following is a 71-amino-acid chain: UPF0346 protein BCE_2336 (71 aa).

It belongs to the UPF0346 family.

The chain is UPF0346 protein BCE_2336 from Bacillus cereus (strain ATCC 10987 / NRS 248).